The chain runs to 216 residues: Thiamine-phosphate synthase (216 aa).

Residues 35-39 (QLRDK) and Asn-67 each bind 4-amino-2-methyl-5-(diphosphooxymethyl)pyrimidine. Mg(2+)-binding residues include Asp-68 and Asp-87. Ser-106 is a binding site for 4-amino-2-methyl-5-(diphosphooxymethyl)pyrimidine. Residue 132–134 (TSS) coordinates 2-[(2R,5Z)-2-carboxy-4-methylthiazol-5(2H)-ylidene]ethyl phosphate. Residue Lys-135 coordinates 4-amino-2-methyl-5-(diphosphooxymethyl)pyrimidine. Residues Gly-163 and 183–184 (IS) contribute to the 2-[(2R,5Z)-2-carboxy-4-methylthiazol-5(2H)-ylidene]ethyl phosphate site.

Belongs to the thiamine-phosphate synthase family. Requires Mg(2+) as cofactor.

The enzyme catalyses 2-[(2R,5Z)-2-carboxy-4-methylthiazol-5(2H)-ylidene]ethyl phosphate + 4-amino-2-methyl-5-(diphosphooxymethyl)pyrimidine + 2 H(+) = thiamine phosphate + CO2 + diphosphate. It carries out the reaction 2-(2-carboxy-4-methylthiazol-5-yl)ethyl phosphate + 4-amino-2-methyl-5-(diphosphooxymethyl)pyrimidine + 2 H(+) = thiamine phosphate + CO2 + diphosphate. The catalysed reaction is 4-methyl-5-(2-phosphooxyethyl)-thiazole + 4-amino-2-methyl-5-(diphosphooxymethyl)pyrimidine + H(+) = thiamine phosphate + diphosphate. It participates in cofactor biosynthesis; thiamine diphosphate biosynthesis; thiamine phosphate from 4-amino-2-methyl-5-diphosphomethylpyrimidine and 4-methyl-5-(2-phosphoethyl)-thiazole: step 1/1. Functionally, condenses 4-methyl-5-(beta-hydroxyethyl)thiazole monophosphate (THZ-P) and 2-methyl-4-amino-5-hydroxymethyl pyrimidine pyrophosphate (HMP-PP) to form thiamine monophosphate (TMP). The sequence is that of Thiamine-phosphate synthase from Methanoregula boonei (strain DSM 21154 / JCM 14090 / 6A8).